Consider the following 83-residue polypeptide: Delta-conotoxin-like Ac6.1 (83 aa).

Residues 1–22 (MKLTCVVIVAVLFLTAWTFVMA) form the signal peptide. Positions 23–51 (DDSRYGLKDLFPKARHEMKNPEASKLNKR) are excised as a propeptide. Cystine bridges form between cysteine 54–cysteine 69, cysteine 61–cysteine 73, and cysteine 68–cysteine 78. 4-hydroxyproline occurs at positions 57 and 65.

This sequence belongs to the conotoxin O1 superfamily. In terms of tissue distribution, expressed by the venom duct.

The protein resides in the secreted. Functionally, delta-conotoxins bind to site 6 of voltage-gated sodium channels (Nav) and inhibit the inactivation process. In Conus achatinus (Little frog cone), this protein is Delta-conotoxin-like Ac6.1.